Consider the following 1001-residue polypeptide: Open rectifier potassium channel protein 1 (1001 aa).

The Cytoplasmic portion of the chain corresponds to 1–6; that stretch reads MSPNRW. The chain crosses the membrane as a helical span at residues 7–27; it reads ILLLIFYISYLMFGAAIYYHI. N58 is a glycosylation site (N-linked (GlcNAc...) asparagine). The segment at residues 95 to 111 is an intramembrane region (pore-forming); that stretch reads AFFFAFTVCSTVGYGNI. A helical membrane pass occupies residues 120 to 140; the sequence is MIMIAYSVIGIPVNGILFAGL. The Cytoplasmic portion of the chain corresponds to 141-170; the sequence is GEYFGRTFEAIYRRYKKYKMSTDMHYVPPQ. The chain crosses the membrane as a helical span at residues 171–191; the sequence is LGLITTVVIALIPGIALFLLL. Residues 208–224 constitute an intramembrane region (pore-forming); the sequence is LYYSYVTTTTIGFGDYV. The helical transmembrane segment at 244–264 threads the bilayer; sequence IFVIVWFIFSLGYLVMIMTFI. The Cytoplasmic portion of the chain corresponds to 265–1001; sequence TRGLQSKKLA…TGSSGAPAEK (737 aa). Residues S332, S373, S562, and S565 each carry the phosphoserine modification. The interval 591-668 is disordered; that stretch reads SQSYLRNGRG…QAPSARRGSM (78 aa). Residues S685, S691, and S715 each carry the phosphoserine modification. Disordered regions lie at residues 768 to 795 and 830 to 1001; these read GGAA…EPPQ and SPTG…PAEK. Low complexity predominate over residues 832–841; that stretch reads TGGAATAPAA. Polar residues predominate over residues 855–873; sequence AANQSQITAGPSNAPTVQS. Residues 911 to 926 are compositionally biased toward low complexity; it reads RRLSLRPSPLARELSP. The span at 961-983 shows a compositional bias: polar residues; sequence RPSTSSTHSPLSRIVQISQAQRK. Residues 984 to 1001 are compositionally biased toward low complexity; the sequence is SSMPSAAATGSSGAPAEK.

This sequence belongs to the two pore domain potassium channel (TC 1.A.1.8) family. Widespread expression in adult, strongest expression in muscle, brain and ovary. Also present at low levels in larva and embryo.

It is found in the membrane. In terms of biological role, background potassium channel. Rectification is dependent on external potassium concentration. Acts as an outwardly rectifying channel but as external potassium levels increase, this is reversed. This chain is Open rectifier potassium channel protein 1 (Ork1), found in Drosophila melanogaster (Fruit fly).